The sequence spans 205 residues: High frequency lysogenization protein HflD homolog (205 aa).

It belongs to the HflD family.

The protein resides in the cytoplasm. Its subcellular location is the cell inner membrane. This Shewanella sp. (strain MR-7) protein is High frequency lysogenization protein HflD homolog.